Reading from the N-terminus, the 113-residue chain is T cell receptor alpha variable 12-2 (113 aa).

An N-terminal signal peptide occupies residues 1-20; sequence MKSLRVLLVILWLQLSWVWS. Positions 23–113 constitute an Ig-like domain; it reads KEVEQNSGPL…DSATYLCAVN (91 aa). N-linked (GlcNAc...) asparagine glycosylation is present at N43. C44 and C110 form a disulfide bridge.

Alpha-beta TR is a heterodimer composed of an alpha and beta chain; disulfide-linked. The alpha-beta TR is associated with the transmembrane signaling CD3 coreceptor proteins to form the TR-CD3 (TcR or TCR). The assembly of alpha-beta TR heterodimers with CD3 occurs in the endoplasmic reticulum where a single alpha-beta TR heterodimer associates with one CD3D-CD3E heterodimer, one CD3G-CD3E heterodimer and one CD247 homodimer forming a stable octameric structure. CD3D-CD3E and CD3G-CD3E heterodimers preferentially associate with TR alpha and TR beta chains, respectively. The association of the CD247 homodimer is the last step of TcR assembly in the endoplasmic reticulum and is required for transport to the cell surface.

The protein resides in the cell membrane. In terms of biological role, v region of the variable domain of T cell receptor (TR) alpha chain that participates in the antigen recognition. Alpha-beta T cell receptors are antigen specific receptors which are essential to the immune response and are present on the cell surface of T lymphocytes. Recognize peptide-major histocompatibility (MH) (pMH) complexes that are displayed by antigen presenting cells (APC), a prerequisite for efficient T cell adaptive immunity against pathogens. Binding of alpha-beta TR to pMH complex initiates TR-CD3 clustering on the cell surface and intracellular activation of LCK that phosphorylates the ITAM motifs of CD3G, CD3D, CD3E and CD247 enabling the recruitment of ZAP70. In turn ZAP70 phosphorylates LAT, which recruits numerous signaling molecules to form the LAT signalosome. The LAT signalosome propagates signal branching to three major signaling pathways, the calcium, the mitogen-activated protein kinase (MAPK) kinase and the nuclear factor NF-kappa-B (NF-kB) pathways, leading to the mobilization of transcription factors that are critical for gene expression and essential for T cell growth and differentiation. The T cell repertoire is generated in the thymus, by V-(D)-J rearrangement. This repertoire is then shaped by intrathymic selection events to generate a peripheral T cell pool of self-MH restricted, non-autoaggressive T cells. Post-thymic interaction of alpha-beta TR with the pMH complexes shapes TR structural and functional avidity. The chain is T cell receptor alpha variable 12-2 from Homo sapiens (Human).